A 342-amino-acid chain; its full sequence is L-threonine 3-dehydrogenase (342 aa).

Position 39 (C39) interacts with Zn(2+). Active-site charge relay system residues include T41 and H44. Residues H64, E65, C94, C97, C100, and C108 each coordinate Zn(2+). NAD(+) is bound by residues I176, D196, R201, 263–265, and 287–288; these read LGI and IY.

This sequence belongs to the zinc-containing alcohol dehydrogenase family. Homotetramer. It depends on Zn(2+) as a cofactor.

The protein resides in the cytoplasm. The enzyme catalyses L-threonine + NAD(+) = (2S)-2-amino-3-oxobutanoate + NADH + H(+). Its pathway is amino-acid degradation; L-threonine degradation via oxydo-reductase pathway; glycine from L-threonine: step 1/2. Functionally, catalyzes the NAD(+)-dependent oxidation of L-threonine to 2-amino-3-ketobutyrate. This is L-threonine 3-dehydrogenase from Protochlamydia amoebophila (strain UWE25).